The following is a 194-amino-acid chain: Peptidyl-tRNA hydrolase (194 aa).

TRNA is bound at residue Tyr-17. The Proton acceptor role is filled by His-22. 3 residues coordinate tRNA: Phe-68, Asn-70, and Asn-116.

It belongs to the PTH family. In terms of assembly, monomer.

Its subcellular location is the cytoplasm. It catalyses the reaction an N-acyl-L-alpha-aminoacyl-tRNA + H2O = an N-acyl-L-amino acid + a tRNA + H(+). In terms of biological role, hydrolyzes ribosome-free peptidyl-tRNAs (with 1 or more amino acids incorporated), which drop off the ribosome during protein synthesis, or as a result of ribosome stalling. Catalyzes the release of premature peptidyl moieties from peptidyl-tRNA molecules trapped in stalled 50S ribosomal subunits, and thus maintains levels of free tRNAs and 50S ribosomes. The sequence is that of Peptidyl-tRNA hydrolase from Haemophilus influenzae (strain PittGG).